A 284-amino-acid chain; its full sequence is Bifunctional protein FolD (284 aa).

NADP(+)-binding positions include 166–168 (GAS) and isoleucine 232.

It belongs to the tetrahydrofolate dehydrogenase/cyclohydrolase family. Homodimer.

The enzyme catalyses (6R)-5,10-methylene-5,6,7,8-tetrahydrofolate + NADP(+) = (6R)-5,10-methenyltetrahydrofolate + NADPH. It carries out the reaction (6R)-5,10-methenyltetrahydrofolate + H2O = (6R)-10-formyltetrahydrofolate + H(+). The protein operates within one-carbon metabolism; tetrahydrofolate interconversion. Its function is as follows. Catalyzes the oxidation of 5,10-methylenetetrahydrofolate to 5,10-methenyltetrahydrofolate and then the hydrolysis of 5,10-methenyltetrahydrofolate to 10-formyltetrahydrofolate. This chain is Bifunctional protein FolD, found in Azotobacter vinelandii (strain DJ / ATCC BAA-1303).